Consider the following 184-residue polypeptide: Guanylate kinase (184 aa).

The Guanylate kinase-like domain maps to 5 to 183; the sequence is KKLIIITGPS…TVKEVLKIIK (179 aa). 12-19 contacts ATP; it reads GPSGVGKG.

The protein belongs to the guanylate kinase family.

Its subcellular location is the cytoplasm. It carries out the reaction GMP + ATP = GDP + ADP. Functionally, essential for recycling GMP and indirectly, cGMP. The chain is Guanylate kinase from Prochlorococcus marinus subsp. pastoris (strain CCMP1986 / NIES-2087 / MED4).